Consider the following 172-residue polypeptide: uncharacterized protein (172 aa).

The HTH cro/C1-type domain occupies 21-75 (FKRILLELGLTLKEFSEISGIPYSTLYKVIQGKDFRVSTLIKILKTIRSFEKDEN). The H-T-H motif DNA-binding region spans 32–51 (LKEFSEISGIPYSTLYKVIQ).

This is an uncharacterized protein from Methanocaldococcus jannaschii (strain ATCC 43067 / DSM 2661 / JAL-1 / JCM 10045 / NBRC 100440) (Methanococcus jannaschii).